We begin with the raw amino-acid sequence, 457 residues long: UDP-N-acetylmuramoyl-tripeptide--D-alanyl-D-alanine ligase (457 aa).

113-119 (GSNGKTT) contacts ATP.

The protein belongs to the MurCDEF family. MurF subfamily.

The protein localises to the cytoplasm. It carries out the reaction D-alanyl-D-alanine + UDP-N-acetyl-alpha-D-muramoyl-L-alanyl-gamma-D-glutamyl-meso-2,6-diaminopimelate + ATP = UDP-N-acetyl-alpha-D-muramoyl-L-alanyl-gamma-D-glutamyl-meso-2,6-diaminopimeloyl-D-alanyl-D-alanine + ADP + phosphate + H(+). It participates in cell wall biogenesis; peptidoglycan biosynthesis. Its function is as follows. Involved in cell wall formation. Catalyzes the final step in the synthesis of UDP-N-acetylmuramoyl-pentapeptide, the precursor of murein. This is UDP-N-acetylmuramoyl-tripeptide--D-alanyl-D-alanine ligase from Bacillus subtilis (strain 168).